Reading from the N-terminus, the 130-residue chain is MSLMDPLANALNHISNCENVGKNTAYLKPASKLIGRVLKVMQDQGYIGNFEYIEDGKAGVYKVTLIGQINKCGAVKPRFAVKNQEFEKFEKRYLPAKGFGLLIVSTPKGLMTHDEAKDSGIGGRLISYIY.

The protein belongs to the universal ribosomal protein uS8 family. In terms of assembly, part of the 30S ribosomal subunit.

Functionally, one of the primary rRNA binding proteins, it binds directly to 16S rRNA central domain where it helps coordinate assembly of the platform of the 30S subunit. This is Small ribosomal subunit protein uS8 from Methanococcus voltae.